Here is a 61-residue protein sequence, read N- to C-terminus: Large ribosomal subunit protein eL37 (61 aa).

Residues cysteine 19, cysteine 22, cysteine 34, and cysteine 37 each coordinate Zn(2+). The segment at 19–37 adopts a C4-type zinc-finger fold; sequence CRRCGRNAYNVSKHYCAAC.

The protein belongs to the eukaryotic ribosomal protein eL37 family. The cofactor is Zn(2+).

Binds to the 23S rRNA. In Saccharolobus solfataricus (strain ATCC 35092 / DSM 1617 / JCM 11322 / P2) (Sulfolobus solfataricus), this protein is Large ribosomal subunit protein eL37 (rpl37e).